A 1416-amino-acid polypeptide reads, in one-letter code: 1-phosphatidylinositol 4,5-bisphosphate phosphodiesterase eta-2 (1416 aa).

The segment at methionine 1–alanine 155 is necessary for plasma membrane localization. The region spanning glycine 47–alanine 155 is the PH domain. 2 consecutive EF-hand domains span residues threonine 169–asparagine 204 and leucine 205–arginine 241. Residues aspartate 182, asparagine 184, aspartate 186, serine 188, and glutamate 193 each contribute to the Ca(2+) site. The 146-residue stretch at glutamine 326–lysine 471 folds into the PI-PLC X-box domain. Histidine 341 is an active-site residue. Positions 342, 371, and 373 each coordinate Ca(2+). Histidine 385 is a catalytic residue. Glutamate 420 lines the Ca(2+) pocket. Lysine 469 and lysine 471 together coordinate substrate. Phosphoserine is present on residues serine 487 and serine 491. Positions aspartate 535–methionine 620 are disordered. A compositionally biased stretch (polar residues) spans asparagine 537–proline 546. Residues serine 581 to lysine 592 are compositionally biased toward basic residues. A phosphoserine mark is found at serine 595 and serine 605. The PI-PLC Y-box domain maps to leucine 626–cysteine 740. Residues serine 653 and arginine 680 each contribute to the substrate site. Residues cysteine 740–glycine 869 enclose the C2 domain. The Ca(2+) site is built by isoleucine 784, aspartate 786, aspartate 810, aspartate 839, histidine 840, and aspartate 841. 3 disordered regions span residues glycine 905–arginine 1109, tyrosine 1121–arginine 1222, and isoleucine 1315–serine 1405. Over residues alanine 1011–alanine 1021 the composition is skewed to pro residues. A compositionally biased stretch (polar residues) spans glycine 1073–arginine 1083. Residues valine 1143–glycine 1166 are compositionally biased toward low complexity. The segment covering lysine 1199–alanine 1208 has biased composition (polar residues). Residues alanine 1324–glycine 1333 are compositionally biased toward gly residues.

Ca(2+) is required as a cofactor. Expressed in retina and kidney.

Its subcellular location is the cytoplasm. It is found in the cell membrane. The enzyme catalyses a 1,2-diacyl-sn-glycero-3-phospho-(1D-myo-inositol-4,5-bisphosphate) + H2O = 1D-myo-inositol 1,4,5-trisphosphate + a 1,2-diacyl-sn-glycerol + H(+). With respect to regulation, activity is stimulated by GNB1:GNG2. The production of the second messenger molecules diacylglycerol (DAG) and inositol 1,4,5-trisphosphate (IP3) is mediated by activated phosphatidylinositol-specific phospholipase C enzymes. This phospholipase activity is very sensitive to calcium. May be important for formation and maintenance of the neuronal network in the postnatal brain. In Homo sapiens (Human), this protein is 1-phosphatidylinositol 4,5-bisphosphate phosphodiesterase eta-2.